Consider the following 249-residue polypeptide: NAD(P)H-quinone oxidoreductase subunit K 2 (249 aa).

The [4Fe-4S] cluster site is built by Cys54, Cys55, Cys119, and Cys150.

It belongs to the complex I 20 kDa subunit family. As to quaternary structure, NDH-1 can be composed of about 15 different subunits; different subcomplexes with different compositions have been identified which probably have different functions. [4Fe-4S] cluster serves as cofactor.

It is found in the cell inner membrane. The catalysed reaction is a plastoquinone + NADH + (n+1) H(+)(in) = a plastoquinol + NAD(+) + n H(+)(out). The enzyme catalyses a plastoquinone + NADPH + (n+1) H(+)(in) = a plastoquinol + NADP(+) + n H(+)(out). Functionally, NDH-1 shuttles electrons from an unknown electron donor, via FMN and iron-sulfur (Fe-S) centers, to quinones in the respiratory and/or the photosynthetic chain. The immediate electron acceptor for the enzyme in this species is believed to be plastoquinone. Couples the redox reaction to proton translocation, and thus conserves the redox energy in a proton gradient. Cyanobacterial NDH-1 also plays a role in inorganic carbon-concentration. The polypeptide is NAD(P)H-quinone oxidoreductase subunit K 2 (Gloeobacter violaceus (strain ATCC 29082 / PCC 7421)).